The primary structure comprises 107 residues: uncharacterized protein (107 aa).

It is found in the mitochondrion. This is an uncharacterized protein from Arabidopsis thaliana (Mouse-ear cress).